The following is a 481-amino-acid chain: Cysteine--tRNA ligase (481 aa).

Cys29 is a binding site for Zn(2+). The 'HIGH' region signature appears at 31–41; it reads PTTYDYIHLGN. 3 residues coordinate Zn(2+): Cys209, His234, and Glu238. Positions 267 to 271 match the 'KMSKS' region motif; that stretch reads KMSKS. Residue Lys270 coordinates ATP.

This sequence belongs to the class-I aminoacyl-tRNA synthetase family. As to quaternary structure, monomer. It depends on Zn(2+) as a cofactor.

Its subcellular location is the cytoplasm. The catalysed reaction is tRNA(Cys) + L-cysteine + ATP = L-cysteinyl-tRNA(Cys) + AMP + diphosphate. The polypeptide is Cysteine--tRNA ligase (Heliobacterium modesticaldum (strain ATCC 51547 / Ice1)).